The chain runs to 211 residues: ATP phosphoribosyltransferase (211 aa).

The protein belongs to the ATP phosphoribosyltransferase family. Short subfamily. As to quaternary structure, heteromultimer composed of HisG and HisZ subunits.

The protein resides in the cytoplasm. The enzyme catalyses 1-(5-phospho-beta-D-ribosyl)-ATP + diphosphate = 5-phospho-alpha-D-ribose 1-diphosphate + ATP. The protein operates within amino-acid biosynthesis; L-histidine biosynthesis; L-histidine from 5-phospho-alpha-D-ribose 1-diphosphate: step 1/9. Functionally, catalyzes the condensation of ATP and 5-phosphoribose 1-diphosphate to form N'-(5'-phosphoribosyl)-ATP (PR-ATP). Has a crucial role in the pathway because the rate of histidine biosynthesis seems to be controlled primarily by regulation of HisG enzymatic activity. This chain is ATP phosphoribosyltransferase, found in Sorangium cellulosum (strain So ce56) (Polyangium cellulosum (strain So ce56)).